The sequence spans 440 residues: Adenylosuccinate synthetase (440 aa).

Residues 12 to 18 (GDEGKGK) and 40 to 42 (GHT) contribute to the GTP site. The active-site Proton acceptor is the D13. Mg(2+) is bound by residues D13 and G40. IMP contacts are provided by residues 13-16 (DEGK), 38-41 (NAGH), T128, R142, Q223, T238, and R302. The Proton donor role is filled by H41. 298–304 (TTTGRPR) is a binding site for substrate. GTP contacts are provided by residues R304, 330-332 (KLD), and 412-414 (SVG).

The protein belongs to the adenylosuccinate synthetase family. In terms of assembly, homodimer. Mg(2+) serves as cofactor.

The protein localises to the cytoplasm. The enzyme catalyses IMP + L-aspartate + GTP = N(6)-(1,2-dicarboxyethyl)-AMP + GDP + phosphate + 2 H(+). It participates in purine metabolism; AMP biosynthesis via de novo pathway; AMP from IMP: step 1/2. In terms of biological role, plays an important role in the de novo pathway of purine nucleotide biosynthesis. Catalyzes the first committed step in the biosynthesis of AMP from IMP. The protein is Adenylosuccinate synthetase of Gloeobacter violaceus (strain ATCC 29082 / PCC 7421).